A 118-amino-acid polypeptide reads, in one-letter code: Large ribosomal subunit protein uL18 (118 aa).

It belongs to the universal ribosomal protein uL18 family. Part of the 50S ribosomal subunit; part of the 5S rRNA/L5/L18/L25 subcomplex. Contacts the 5S and 23S rRNAs.

In terms of biological role, this is one of the proteins that bind and probably mediate the attachment of the 5S RNA into the large ribosomal subunit, where it forms part of the central protuberance. The chain is Large ribosomal subunit protein uL18 from Rickettsia typhi (strain ATCC VR-144 / Wilmington).